The primary structure comprises 258 residues: E3 ubiquitin-protein ligase RNF170 (258 aa).

At 1–24 (MAKYQGEVQSLKLDDDSVIEGVSD) the chain is on the lumenal side. Residues 25-45 (QVLVAVVVSFALIATLVYALF) traverse the membrane as a helical segment. Residues 46–201 (RNVHQNIHPE…GGLFWMFRIR (156 aa)) are Cytoplasmic-facing. An RING-type zinc finger spans residues 87-130 (CPICLHQASFPVETNCGHLFCGACIIAYWRYGSWLGAISCPICR). The helical transmembrane segment at 202–222 (IILCLMGAFFYLISPLDFVPE) threads the bilayer. A223 is a topological domain (lumenal). Residues 224–244 (LFGILGFLDDFFVIFLLLIYI) traverse the membrane as a helical segment. Residues 245-258 (SIMYREVITQRLTR) are Cytoplasmic-facing.

In terms of assembly, (Microbial infection) Interacts with human cytomegalovirus protein NEC2/UL50; this interaction promotes of UBA7 ubiquitination and subsequent proteasomal degradation. As to quaternary structure, constitutively associated with the ERLIN1/ERLIN 2 complex. Interacts with activated ITPR1. In terms of tissue distribution, expressed in the spinal cord.

It is found in the endoplasmic reticulum membrane. It carries out the reaction S-ubiquitinyl-[E2 ubiquitin-conjugating enzyme]-L-cysteine + [acceptor protein]-L-lysine = [E2 ubiquitin-conjugating enzyme]-L-cysteine + N(6)-ubiquitinyl-[acceptor protein]-L-lysine.. Its pathway is protein modification; protein ubiquitination. E3 ubiquitin-protein ligase that plays an essential role in stimulus-induced inositol 1,4,5-trisphosphate receptor type 1 (ITPR1) ubiquitination and degradation via the endoplasmic reticulum-associated degradation (ERAD) pathway. Also involved in ITPR1 turnover in resting cells. Selectively inhibits the TLR3-triggered innate immune response by promoting the 'Lys-48'-linked polyubiquitination and degradation of TLR3. The polypeptide is E3 ubiquitin-protein ligase RNF170 (RNF170) (Homo sapiens (Human)).